The primary structure comprises 800 residues: Phosphate transporter PHO1 homolog 9 (800 aa).

The 346-residue stretch at 1 to 346 (MKFGREFETQ…SRNASKPYLN (346 aa)) folds into the SPX domain. Over 1 to 398 (MKFGREFETQ…KTKREKHRIT (398 aa)) the chain is Cytoplasmic. 3 disordered regions span residues 38–77 (QKQQ…PGLS), 91–119 (NRAS…HNHH), and 212–234 (PDLN…PAPS). Pro residues predominate over residues 42-51 (RPPPPPPPPS). Residues 63-75 (GEGGGGGGGGGPG) show a composition bias toward gly residues. Residues 95–119 (RSPKKSHKHHNPLSSKRHHHHHNHH) are compositionally biased toward basic residues. The segment covering 216-229 (SVASAPSSPHSTMR) has biased composition (polar residues). A helical transmembrane segment spans residues 399–419 (YFLGFFSGCAVALAIAITVLV). The Extracellular segment spans residues 420 to 439 (HIRGLTKSEGRHQYMENIFP). Residues 440 to 460 (LYSLFGFVAVHLFMYAADIYF) traverse the membrane as a helical segment. The Cytoplasmic portion of the chain corresponds to 461–483 (WSRYRVNYPFIFGFEQGNDLGYR). The chain crosses the membrane as a helical span at residues 484 to 504 (EVLLVGSGLAVLTFGGVISNL). Over 505 to 520 (DMEMDPRTKSFSVITE) the chain is Extracellular. The helical transmembrane segment at 521–541 (LVPLALLVCLMMVLFCPFNII) threads the bilayer. Over 542-670 (YRSSRYFFVG…IFEMKRGTYW (129 aa)) the chain is Cytoplasmic. The EXS domain maps to 606–800 (YDSEIYKELY…FQELGGSKSV (195 aa)). Residues 671–691 (LTVAVTTSSIATLFNTYWDIF) traverse the membrane as a helical segment. The Extracellular portion of the chain corresponds to 692 to 718 (RDWGLMNRNSKNPWLRDKLLVPYKSIY). Residues 719 to 739 (FIVMVANVVLRLAWMQTVLGI) form a helical membrane-spanning segment. At 740-800 (KEAPFLHKRA…FQELGGSKSV (61 aa)) the chain is on the cytoplasmic side.

Belongs to the SYG1 (TC 2.A.94) family. As to expression, specifically expressed in pollen grains.

The protein resides in the cell membrane. Its function is as follows. May transport inorganic phosphate (Pi). This Arabidopsis thaliana (Mouse-ear cress) protein is Phosphate transporter PHO1 homolog 9 (PHO1-H9).